The primary structure comprises 471 residues: Glutamate--tRNA ligase (471 aa).

The 'HIGH' region signature appears at P9–G19. Residues C98, C100, C125, and H127 each contribute to the Zn(2+) site. Positions K237–R241 match the 'KMSKS' region motif. K240 serves as a coordination point for ATP.

Belongs to the class-I aminoacyl-tRNA synthetase family. Glutamate--tRNA ligase type 1 subfamily. As to quaternary structure, monomer. Zn(2+) serves as cofactor.

Its subcellular location is the cytoplasm. The enzyme catalyses tRNA(Glu) + L-glutamate + ATP = L-glutamyl-tRNA(Glu) + AMP + diphosphate. Catalyzes the attachment of glutamate to tRNA(Glu) in a two-step reaction: glutamate is first activated by ATP to form Glu-AMP and then transferred to the acceptor end of tRNA(Glu). This Escherichia coli O1:K1 / APEC protein is Glutamate--tRNA ligase.